Here is a 349-residue protein sequence, read N- to C-terminus: Beta-glucanase (349 aa).

Positions 1-27 (MNIKKTAVKSALAVAAAAAALTTNVSA) are cleaved as a signal peptide. In terms of domain architecture, GH16 spans 28 to 197 (KDFSGAELYT…WVKVYKYTPG (170 aa)). The Nucleophile role is filled by glutamate 79. The Proton donor role is filled by glutamate 83. Residues 258 to 311 (SFNGQVPRDDEPAPQSSSSAPASSSSVPASSSSVPASSSSAFVPPSSSSATNAI) are disordered. The span at 270 to 307 (APQSSSSAPASSSSVPASSSSVPASSSSAFVPPSSSSA) shows a compositional bias: low complexity. 5 tandem repeats follow at residues 271–277 (PQSSSSA), 278–284 (PASSSSV), 285–291 (PASSSSV), 292–298 (PASSSSA), and 301–307 (PPSSSSA). Residues 271-307 (PQSSSSAPASSSSVPASSSSVPASSSSAFVPPSSSSA) form a 5 X 7 AA tandem repeats of P-X-S-S-S-S-X region.

The protein belongs to the glycosyl hydrolase 16 family.

The catalysed reaction is Hydrolysis of (1-&gt;4)-beta-D-glucosidic linkages in beta-D-glucans containing (1-&gt;3)- and (1-&gt;4)-bonds.. The protein is Beta-glucanase of Fibrobacter succinogenes (strain ATCC 19169 / S85).